Here is a 513-residue protein sequence, read N- to C-terminus: 5-aminolevulinate synthase, erythroid-specific, mitochondrial (513 aa).

Residues 1-18 constitute a mitochondrion transit peptide; that stretch reads MAAFLRCPLLARHPPLAR. Residue Arg98 coordinates succinyl-CoA. Pyridoxal 5'-phosphate is bound by residues Cys190 and Phe191. Succinyl-CoA is bound by residues Ser212 and Lys231. Residues Ser264, His292, and Thr320 each contribute to the pyridoxal 5'-phosphate site. Lys323 is a catalytic residue. Lys323 is modified (N6-(pyridoxal phosphate)lysine). Residues Thr352 and Thr353 each coordinate pyridoxal 5'-phosphate. A succinyl-CoA-binding site is contributed by Thr437.

The protein belongs to the class-II pyridoxal-phosphate-dependent aminotransferase family. As to quaternary structure, homodimer. Pyridoxal 5'-phosphate is required as a cofactor. In terms of tissue distribution, erythroid-specific.

It is found in the mitochondrion inner membrane. It carries out the reaction succinyl-CoA + glycine + H(+) = 5-aminolevulinate + CO2 + CoA. Its pathway is porphyrin-containing compound metabolism; protoporphyrin-IX biosynthesis; 5-aminolevulinate from glycine: step 1/1. Functionally, catalyzes the pyridoxal 5'-phosphate (PLP)-dependent condensation of succinyl-CoA and glycine to form aminolevulinic acid (ALA), with CoA and CO2 as by-products. Contributes significantly to heme formation during erythropoiesis. In Gallus gallus (Chicken), this protein is 5-aminolevulinate synthase, erythroid-specific, mitochondrial (ALAS2).